The following is a 174-amino-acid chain: Photosystem I assembly protein Ycf4 (174 aa).

2 helical membrane passes run 11-31 (LSNI…FLNG) and 56-76 (IILM…CLTI).

It belongs to the Ycf4 family.

Its subcellular location is the plastid. It is found in the chloroplast thylakoid membrane. Its function is as follows. Seems to be required for the assembly of the photosystem I complex. This chain is Photosystem I assembly protein Ycf4, found in Emiliania huxleyi (Coccolithophore).